A 163-amino-acid chain; its full sequence is I-Kappa-B like protein N3 (163 aa).

2 ANK repeats span residues 62 to 95 (LGDT…NLNT) and 100 to 130 (NGDT…NLQT).

This sequence belongs to the polydnaviridae I-Kappa-B like protein family.

Its function is as follows. Suppresses the host immune response through NF-kappa-B inactivation. Possesses ankyrin repeat domains required for NF-kappa-B binding but lacks the regulatory regions required for dissociation from NF-kappa-B and degradation. Therefore, prevents host NF-kappa-B release and subsequent activation. In Microplitis demolitor (Parasitoid wasp), this protein is I-Kappa-B like protein N3 (N6).